Here is a 279-residue protein sequence, read N- to C-terminus: Pantothenate synthetase (279 aa).

An ATP-binding site is contributed by 31-38 (MGALHEGH). Residue His38 is the Proton donor of the active site. Residue Gln62 participates in (R)-pantoate binding. Residue Gln62 coordinates beta-alanine. Position 148-151 (148-151 (GEKD)) interacts with ATP. Gln154 provides a ligand contact to (R)-pantoate. Residues Val177 and 185 to 188 (LSSR) contribute to the ATP site.

Belongs to the pantothenate synthetase family. In terms of assembly, homodimer.

The protein localises to the cytoplasm. It carries out the reaction (R)-pantoate + beta-alanine + ATP = (R)-pantothenate + AMP + diphosphate + H(+). The protein operates within cofactor biosynthesis; (R)-pantothenate biosynthesis; (R)-pantothenate from (R)-pantoate and beta-alanine: step 1/1. Catalyzes the condensation of pantoate with beta-alanine in an ATP-dependent reaction via a pantoyl-adenylate intermediate. The protein is Pantothenate synthetase of Cereibacter sphaeroides (strain ATCC 17023 / DSM 158 / JCM 6121 / CCUG 31486 / LMG 2827 / NBRC 12203 / NCIMB 8253 / ATH 2.4.1.) (Rhodobacter sphaeroides).